The following is a 382-amino-acid chain: MSKPIRIGMVAGEPSGDILAAGMVAELKRQYPDAIIEGIGGPNMIDAGFHSLFDMETLSVMGLVEVLAHLPAILKVKKQLLAHFEQNPPDIFVGVDAPDFNLRVEKALKARGIKTMHYVSPTVWAWREKRIHKIAKAANRVLGLFPFEQQVYDKYHVPYTFVGHTMADAIAIEPDQNAARQELGVESNAYVLAVLPGSRRGEVETLLPVFLETIEAIHVKRSDIQFLIPAANEHRLAQIKAFLQEANNAEERLPIQVTQGTSRDAMIASDVILLASGTATLEAMLCKRPMVAAYLLSPLTYKIMQRLYKAPFFTLPNLLANEAIIPELLQEEVNAENMSNQLLNFFESDNSALIARFTDLHHTLKCNADKTAAKAVVEELFA.

This sequence belongs to the LpxB family.

It carries out the reaction a lipid X + a UDP-2-N,3-O-bis[(3R)-3-hydroxyacyl]-alpha-D-glucosamine = a lipid A disaccharide + UDP + H(+). Its pathway is bacterial outer membrane biogenesis; LPS lipid A biosynthesis. Its function is as follows. Condensation of UDP-2,3-diacylglucosamine and 2,3-diacylglucosamine-1-phosphate to form lipid A disaccharide, a precursor of lipid A, a phosphorylated glycolipid that anchors the lipopolysaccharide to the outer membrane of the cell. In Alteromonas mediterranea (strain DSM 17117 / CIP 110805 / LMG 28347 / Deep ecotype), this protein is Lipid-A-disaccharide synthase.